A 527-amino-acid polypeptide reads, in one-letter code: Glucose-6-phosphate isomerase (527 aa).

Glutamate 323 acts as the Proton donor in catalysis. Catalysis depends on residues histidine 352 and lysine 454.

Belongs to the GPI family.

Its subcellular location is the cytoplasm. It catalyses the reaction alpha-D-glucose 6-phosphate = beta-D-fructose 6-phosphate. The protein operates within carbohydrate biosynthesis; gluconeogenesis. It functions in the pathway carbohydrate degradation; glycolysis; D-glyceraldehyde 3-phosphate and glycerone phosphate from D-glucose: step 2/4. In terms of biological role, catalyzes the reversible isomerization of glucose-6-phosphate to fructose-6-phosphate. The chain is Glucose-6-phosphate isomerase from Prochlorococcus marinus (strain MIT 9215).